Reading from the N-terminus, the 548-residue chain is MNAKMTIWKSTLCNLERDFPSTDRVPFFAWATGKASINDFVLPSVSCEKGNFLKISAPQRMDLPVILKTSIDSSTAYKHSRLKFRLKEVAPKCYSDIMQMIGEKEPVVLVFNKVLDTAEATVSGVITNFLIHSSIQKQIILPPHFHISRDDFRIYPQDDEARLNTHLNRLNSLKADGVKTSILPIGHKGAGKSNLMRNLVNRCLSNGYEHVYVLDCDIGQSEFTPNGCISLTKVTSPLLDKPYGHQKKTFDNSYFYGDITVNDNNIDHYMDIFERLFNKFKLISEPGSVCIVNSMGWIVDEGAEILDGIIRVIEPDLCVEIFRDQTEARYSFKEFEKCKVVEIFANNSVGVIGLPNQKKLPAPLHRELTITGYFSSLLPRPTIASFASVPPYRLNFRNITICLPMDLLVEDCHIFSSINTQLIALCVKNPDLKTRKLNGKQDMPSLSVIDSTSPALQCIGFGIIRGVNVEERSVYVVTPVNLLKLQEPPLLVRGMRIQTPSQFFTADPYNRCPYVLNLPDKSSHASANLDGLYEPSINTTQFKRSRRF.

Position 186-193 (G186–S193) interacts with ATP.

This sequence belongs to the Clp1 family. NOL9/GRC3 subfamily.

It is found in the nucleus. It localises to the nucleolus. Its function is as follows. Polynucleotide 5'-kinase involved in rRNA processing. This is Polynucleotide 5'-hydroxyl-kinase nol-9 (nol-9) from Caenorhabditis briggsae.